Consider the following 466-residue polypeptide: L-seryl-tRNA(Sec) selenium transferase (466 aa).

The residue at position 292 (Lys292) is an N6-(pyridoxal phosphate)lysine.

Belongs to the SelA family. The cofactor is pyridoxal 5'-phosphate.

Its subcellular location is the cytoplasm. The catalysed reaction is L-seryl-tRNA(Sec) + selenophosphate + H(+) = L-selenocysteinyl-tRNA(Sec) + phosphate. It participates in aminoacyl-tRNA biosynthesis; selenocysteinyl-tRNA(Sec) biosynthesis; selenocysteinyl-tRNA(Sec) from L-seryl-tRNA(Sec) (bacterial route): step 1/1. Its function is as follows. Converts seryl-tRNA(Sec) to selenocysteinyl-tRNA(Sec) required for selenoprotein biosynthesis. This Rhizobium meliloti (strain 1021) (Ensifer meliloti) protein is L-seryl-tRNA(Sec) selenium transferase.